The sequence spans 405 residues: Succinyl-CoA--L-malate CoA-transferase beta subunit (405 aa).

Catalysis depends on aspartate 175, which acts as the Nucleophile.

This sequence belongs to the CoA-transferase III family. As to quaternary structure, forms a large complex composed of six heterodimers (alpha, beta).

The enzyme catalyses succinyl-CoA + (S)-malate = (S)-malyl-CoA + succinate. It carries out the reaction (3S)-citramalate + succinyl-CoA = (3S)-citramalyl-CoA + succinate. Functionally, involved in the 3-hydroxypropionate cycle used for autotrophic carbon dioxide fixation. Catalyzes the transfer of CoA moiety from succinyl-CoA to L-malate to yield L-malyl-CoA. The protein is Succinyl-CoA--L-malate CoA-transferase beta subunit (smtB) of Chloroflexus aurantiacus (strain ATCC 29366 / DSM 635 / J-10-fl).